The chain runs to 239 residues: 1-(5-phosphoribosyl)-5-[(5-phosphoribosylamino)methylideneamino] imidazole-4-carboxamide isomerase (239 aa).

Catalysis depends on Asp-8, which acts as the Proton acceptor. The active-site Proton donor is Asp-129.

This sequence belongs to the HisA/HisF family.

It localises to the cytoplasm. The catalysed reaction is 1-(5-phospho-beta-D-ribosyl)-5-[(5-phospho-beta-D-ribosylamino)methylideneamino]imidazole-4-carboxamide = 5-[(5-phospho-1-deoxy-D-ribulos-1-ylimino)methylamino]-1-(5-phospho-beta-D-ribosyl)imidazole-4-carboxamide. The protein operates within amino-acid biosynthesis; L-histidine biosynthesis; L-histidine from 5-phospho-alpha-D-ribose 1-diphosphate: step 4/9. The polypeptide is 1-(5-phosphoribosyl)-5-[(5-phosphoribosylamino)methylideneamino] imidazole-4-carboxamide isomerase (Legionella pneumophila (strain Lens)).